The following is a 312-amino-acid chain: Methionyl-tRNA formyltransferase (312 aa).

(6S)-5,6,7,8-tetrahydrofolate is bound at residue Ser-109–Pro-112.

The protein belongs to the Fmt family.

It carries out the reaction L-methionyl-tRNA(fMet) + (6R)-10-formyltetrahydrofolate = N-formyl-L-methionyl-tRNA(fMet) + (6S)-5,6,7,8-tetrahydrofolate + H(+). Its function is as follows. Attaches a formyl group to the free amino group of methionyl-tRNA(fMet). The formyl group appears to play a dual role in the initiator identity of N-formylmethionyl-tRNA by promoting its recognition by IF2 and preventing the misappropriation of this tRNA by the elongation apparatus. The chain is Methionyl-tRNA formyltransferase from Listeria monocytogenes serovar 1/2a (strain ATCC BAA-679 / EGD-e).